A 152-amino-acid chain; its full sequence is CASP-like protein 5C1 (152 aa).

At 1-12 (MVRTTASFGTSS) the chain is on the cytoplasmic side. The chain crosses the membrane as a helical span at residues 13 to 33 (SFVLRLGQTLFSSASLLFMCF). Residues 34–44 (NDDEDFYAYTT) are Extracellular-facing. A helical membrane pass occupies residues 45–65 (FCYLVTVMGLVTPWSVTLALM). Over 66–80 (EAYSILVKKLPMQAT) the chain is Cytoplasmic. The helical transmembrane segment at 81–101 (VISVIVAGDFVLSFLSLGGAC) threads the bilayer. Over 102–126 (STASVAVLLMDAGEKQCDRYKLSAT) the chain is Extracellular. A helical membrane pass occupies residues 127–147 (MAFLSSFLSFASTFFNFCLLP). Topologically, residues 148–152 (SLMSH) are cytoplasmic.

Belongs to the Casparian strip membrane proteins (CASP) family. Homodimer and heterodimers.

The protein resides in the cell membrane. The sequence is that of CASP-like protein 5C1 from Arabidopsis thaliana (Mouse-ear cress).